Here is a 122-residue protein sequence, read N- to C-terminus: Large ribosomal subunit protein uL14 (122 aa).

The protein belongs to the universal ribosomal protein uL14 family. Part of the 50S ribosomal subunit. Forms a cluster with proteins L3 and L19. In the 70S ribosome, L14 and L19 interact and together make contacts with the 16S rRNA in bridges B5 and B8.

In terms of biological role, binds to 23S rRNA. Forms part of two intersubunit bridges in the 70S ribosome. This Leuconostoc mesenteroides subsp. mesenteroides (strain ATCC 8293 / DSM 20343 / BCRC 11652 / CCM 1803 / JCM 6124 / NCDO 523 / NBRC 100496 / NCIMB 8023 / NCTC 12954 / NRRL B-1118 / 37Y) protein is Large ribosomal subunit protein uL14.